The following is a 146-amino-acid chain: MSTPFWQSKSLEHMSEEEWESLCDGCGKCCLHKLMDEDTDEIYYTNVACSWLNSKTCSCKDYPNRFTSGEECTKLTREDIDDFTWLPHTCAYRLLAENQPLPEWHPLITGSKSAMHAAGESVRNKVVYEIDVVDWEDHILNHPNRP.

The protein belongs to the UPF0260 family.

This chain is UPF0260 protein VP2169, found in Vibrio parahaemolyticus serotype O3:K6 (strain RIMD 2210633).